Here is a 214-residue protein sequence, read N- to C-terminus: ER lumen protein-retaining receptor 3 (214 aa).

At 1–4 the chain is on the lumenal side; that stretch reads MNVF. Residues 5 to 24 traverse the membrane as a helical segment; the sequence is RISGDVSHLLAIIILLLKMW. Residues 25 to 32 lie on the Cytoplasmic side of the membrane; the sequence is KSKSCAGI. A helical transmembrane segment spans residues 33 to 52; sequence SGKSQLLFALVFTTRYLDLF. The tract at residues 47-48 is interaction with the K-D-E-L motif on target proteins; that stretch reads RY. Over 53 to 58 the chain is Lumenal; it reads TVFISA. Residues 59-79 traverse the membrane as a helical segment; it reads YNTVMKIVFLVCAYVTVYLIY. The Cytoplasmic portion of the chain corresponds to 80-92; the sequence is GKFRKAYDSENDT. A helical membrane pass occupies residues 93 to 110; it reads FRLEFLLVPVIGLSFLEN. The Lumenal portion of the chain corresponds to 111-116; sequence YEFTPL. A helical transmembrane segment spans residues 117–135; that stretch reads EILWTFSIYLESVAILPQL. Topologically, residues 136 to 149 are cytoplasmic; sequence FMISKTGEAESITT. A helical transmembrane segment spans residues 150–168; that stretch reads HYLFFLGLYRVLYLANWIW. The interaction with the K-D-E-L motif on target proteins stretch occupies residues 159–169; it reads RVLYLANWIWR. Residues 169–178 are Lumenal-facing; sequence RYHTEKFYDQ. Residues 179–199 form a helical membrane-spanning segment; that stretch reads IAVVSGVVQTIFYFDFFYLYI. The Cytoplasmic portion of the chain corresponds to 200-214; sequence TKVLKGKKLSLPMPV. The tract at residues 204–207 is important for recycling of cargo proteins with the sequence motif K-D-E-L from the Golgi to the endoplasmic reticulum; the sequence is KGKK.

It belongs to the ERD2 family.

Its subcellular location is the endoplasmic reticulum membrane. It is found in the golgi apparatus membrane. The protein resides in the cytoplasmic vesicle. It localises to the COPI-coated vesicle membrane. Its function is as follows. Receptor for the C-terminal sequence motif K-D-E-L that is present on endoplasmic reticulum resident proteins and that mediates their recycling from the Golgi back to the endoplasmic reticulum. This chain is ER lumen protein-retaining receptor 3 (kdelr3), found in Xenopus tropicalis (Western clawed frog).